We begin with the raw amino-acid sequence, 463 residues long: Tryptophan aminotransferase-related protein 4 (463 aa).

A helical transmembrane segment spans residues 6–26 (LLLIVSIILNLVFTIHILYYS). Pyridoxal 5'-phosphate contacts are provided by residues tyrosine 124, 163–164 (TT), asparagine 239, 259–262 (DYAY), 282–285 (SLSK), and arginine 293. Position 285 is an N6-(pyridoxal phosphate)lysine (lysine 285).

The protein belongs to the alliinase family. It depends on pyridoxal 5'-phosphate as a cofactor.

The protein resides in the membrane. Functionally, probable aminotransferase. In Arabidopsis thaliana (Mouse-ear cress), this protein is Tryptophan aminotransferase-related protein 4 (TAR4).